A 718-amino-acid polypeptide reads, in one-letter code: Kelch-like protein 4 (718 aa).

The disordered stretch occupies residues 46 to 69 (TPVQGRLKSHSRDRNGLKKSNSPV). The region spanning 182 to 249 (CDVLLIAGHL…AYTGVLQLKE (68 aa)) is the BTB domain. Kelch repeat units lie at residues 430 to 476 (ALYA…VIDN), 477 to 523 (KLYV…TLEG), 525 to 570 (MYAV…ALNN), 571 to 617 (KLYA…TYNG), 619 to 670 (LYVV…PLGD), and 671 to 717 (KLYV…VVKL).

As to expression, expressed in adult fibroblasts and in a range of fetal tissues including tongue, palate, and mandible.

Its subcellular location is the cytoplasm. It localises to the cytoskeleton. The sequence is that of Kelch-like protein 4 (KLHL4) from Homo sapiens (Human).